A 42-amino-acid polypeptide reads, in one-letter code: Potassium channel toxin gamma-KTx 1.4 (42 aa).

4 cysteine pairs are disulfide-bonded: C5-C23, C11-C34, C20-C39, and C24-C41.

This sequence belongs to the ergtoxin family. Gamma-KTx 1 subfamily. In terms of tissue distribution, expressed by the venom gland.

The protein localises to the secreted. Functionally, blocks Kv11/ERG potassium channels. The chain is Potassium channel toxin gamma-KTx 1.4 from Centruroides sculpturatus (Arizona bark scorpion).